The chain runs to 599 residues: MCEQLARLHGCNILIIGDNDCLVNKYGHSVTIACGYDPQGMSVRILKEGGGGGGGGGGGQQLEEYPVNAKTTHLNHGHTSHVVVAGGEMLYLKFASKADCQLFRSLLQKMSGKVNSVFNLRTEDSSASQYFQFYGYLSQQQNMMQDFVRTSTYQRAIYSNSQDFHNKIVLDVGAGSGILSFFAVQAGAAKVYAVEASNMAQYAQQLVHSNNLNGKITVIAGKIEEIELPEMVDVIISEPMGYMLYNERMLETYLHGKKWLKPEGKMFPSRGDLHVAPFTDEALYMEQYNKANFWMQSEFHGVNLVSLRDAAMKEYFRQPIVDTFDIRICMAKSIRHTTNFLTADEKDLHRIQIDVEFHILETGTCHGLAFWFDVEFAGSCSQIWLSTAPTESLTHWYQVRCLLQTPIFVKQGQVLSGKVVLAANQRQSYDVEIDLKLEGTMITSCNTLDLKNPYFRYTGAPVPAPPGSNTTSPSEAYWGQLDAQGARNAVNLVNGITVNGLGEVDMSIINSNMMPMGNQPNIHPGLISSTGRQQSAQQQVTPSQQLTMNPTIACAATSTQNVAQQQLIGGAISPSLFTTPTQQIINSHHAQPIHGGQFY.

In terms of domain architecture, SAM-dependent MTase PRMT-type spans 127–434 (ASQYFQFYGY…QRQSYDVEID (308 aa)). Residues Gln140, Arg149, Gly173, Glu195, Glu224, and Thr252 each coordinate S-adenosyl-L-methionine. The residue at position 487 (Arg487) is an Asymmetric dimethylarginine; by autocatalysis.

Belongs to the class I-like SAM-binding methyltransferase superfamily. Protein arginine N-methyltransferase family. In terms of assembly, homodimer. The dimethylated protein is the major form.

Its subcellular location is the cytoplasm. The protein localises to the nucleus. The enzyme catalyses L-arginyl-[protein] + 2 S-adenosyl-L-methionine = N(omega),N(omega)-dimethyl-L-arginyl-[protein] + 2 S-adenosyl-L-homocysteine + 2 H(+). Methylates (mono- and asymmetric dimethylation) the guanidino nitrogens of arginyl residues in proteins. May methylate histone H3 at 'Arg-17' and activate transcription via chromatin remodeling. This is Histone-arginine methyltransferase CARMER (Art4) from Culex quinquefasciatus (Southern house mosquito).